Here is a 131-residue protein sequence, read N- to C-terminus: D-ribose pyranase (131 aa).

The Proton donor role is filled by H20. Residues D28, H98, and 120 to 122 contribute to the substrate site; that span reads YAN.

Belongs to the RbsD / FucU family. RbsD subfamily. In terms of assembly, homodecamer.

It localises to the cytoplasm. The catalysed reaction is beta-D-ribopyranose = beta-D-ribofuranose. The protein operates within carbohydrate metabolism; D-ribose degradation; D-ribose 5-phosphate from beta-D-ribopyranose: step 1/2. Its function is as follows. Catalyzes the interconversion of beta-pyran and beta-furan forms of D-ribose. The sequence is that of D-ribose pyranase from Bacillus thuringiensis (strain Al Hakam).